A 389-amino-acid polypeptide reads, in one-letter code: MIKDMQPFLQQAWEKAGFKELTEIQKQAIPTILEGQDVIAESPTGTGKTLAYLLPLLHKINPEVKQPQVVVLAPTRELVMQIHEEVQKFTAGTEISGASLIGGADIKRQVEKLKKHPRVIVGSPGRILELIRMKKLKMHEVKTIVFDEFDQIVKQKMMGAVQDVIKSTMRDRQLVFFSATMTKAAEDAARDLAVEPQLVRVTRAESKSLVEHTYIICERREKNDYVRRIMHMGDVKAVAFLNDPFRLDEITEKLKFRKMKAAALHAEASKQEREATMRAFRGGKLEILLATDIAARGIDIDDLTHVIHLELPDTVDQYIHRSGRTGRMGKEGTVVSLVTPQEERKLLQFAKKLGIVFTKQEMFKGSFVETKPKAPKKKKPAFTGKKKPR.

Residues 1 to 26 (MIKDMQPFLQQAWEKAGFKELTEIQK) carry the Q motif motif. Residues 29-199 (IPTILEGQDV…RDLAVEPQLV (171 aa)) enclose the Helicase ATP-binding domain. 42 to 49 (SPTGTGKT) provides a ligand contact to ATP. Residues 147 to 150 (DEFD) carry the DEAD box motif. The 171-residue stretch at 209-379 (LVEHTYIICE…TKPKAPKKKK (171 aa)) folds into the Helicase C-terminal domain. A disordered region spans residues 368–389 (VETKPKAPKKKKPAFTGKKKPR). A compositionally biased stretch (basic residues) spans 373-389 (KAPKKKKPAFTGKKKPR).

It carries out the reaction ATP + H2O = ADP + phosphate + H(+). DEAD-box RNA helicase. Probably has an RNA-dependent ATPase activity and a 3' to 5' RNA helicase activity that uses the energy of ATP hydrolysis to destabilize and unwind short RNA duplexes. This is DEAD-box ATP-dependent RNA helicase CshC (cshC) from Bacillus cereus (strain ATCC 14579 / DSM 31 / CCUG 7414 / JCM 2152 / NBRC 15305 / NCIMB 9373 / NCTC 2599 / NRRL B-3711).